We begin with the raw amino-acid sequence, 719 residues long: ATP-dependent RNA helicase p62 (719 aa).

The disordered stretch occupies residues 94–234; it reads AQSQRAFRDS…GSQDLPMRPV (141 aa). Composition is skewed to basic and acidic residues over residues 99–108 and 137–171; these read AFRDSSKPDS and EEIK…DRRG. Gly residues predominate over residues 172–188; sequence GGGGGNRFGGGGGGGDY. The segment covering 194–205 has biased composition (basic and acidic residues); it reads GRVEKRRDDRGG. A compositionally biased stretch (gly residues) spans 206–226; sequence GNRFGGGGGFGDRRGGGGGGS. A Q motif motif is present at residues 281–309; it reads QDFSEVHLPDYVMKEIRRQGYKAPTAIQA. The Helicase ATP-binding domain occupies 312-487; that stretch reads WPIAMSGSNF…EDFLGNYIQI (176 aa). Residue 325 to 332 coordinates ATP; sequence AKTGSGKT. Positions 435–438 match the DEAD box motif; sequence DEAD. The Helicase C-terminal domain maps to 519 to 664; the sequence is LLSDIYDTSE…EINPALENLA (146 aa). The disordered stretch occupies residues 689–719; sequence GGGFKKGSLSNGRGFGGGGGGGGEGRHSRFD. The span at 701 to 711 shows a compositional bias: gly residues; the sequence is RGFGGGGGGGG.

It belongs to the DEAD box helicase family. DDX5/DBP2 subfamily. Interacts with Fmr1 to form the RNA-induced silencing complex (RISC), a ribonucleoprotein (RNP) complex involved in translation regulation, other components of the complex are RpL5, RpL11, AGO2 and Dcr-1.

Its subcellular location is the nucleus. It localises to the nucleolus. It is found in the cytoplasm. The protein localises to the cytosol. The enzyme catalyses ATP + H2O = ADP + phosphate + H(+). Functionally, as an RNA helicase, unwinds RNA and alters RNA structures through ATP binding and hydrolysis. Involved in multiple cellular processes, including pre-mRNA splicing, alternative splicing, rRNA processing and miRNA processing, as well as transcription regulation. Plays a role in innate immunity. Specifically restricts bunyavirus infection, including Rift Valley fever virus (RVFV) or La Crosse virus (LACV), but not vesicular stomatitis virus (VSV), in an interferon- and DROSHA-independent manner. The polypeptide is ATP-dependent RNA helicase p62 (Rm62) (Drosophila melanogaster (Fruit fly)).